A 266-amino-acid polypeptide reads, in one-letter code: DNA repair protein RecO (266 aa).

Belongs to the RecO family.

In terms of biological role, involved in DNA repair and RecF pathway recombination. The sequence is that of DNA repair protein RecO from Synechococcus elongatus (strain ATCC 33912 / PCC 7942 / FACHB-805) (Anacystis nidulans R2).